A 470-amino-acid polypeptide reads, in one-letter code: 3-isopropylmalate dehydratase large subunit (470 aa).

[4Fe-4S] cluster-binding residues include Cys348, Cys409, and Cys412.

Belongs to the aconitase/IPM isomerase family. LeuC type 1 subfamily. Heterodimer of LeuC and LeuD. It depends on [4Fe-4S] cluster as a cofactor.

The enzyme catalyses (2R,3S)-3-isopropylmalate = (2S)-2-isopropylmalate. The protein operates within amino-acid biosynthesis; L-leucine biosynthesis; L-leucine from 3-methyl-2-oxobutanoate: step 2/4. Functionally, catalyzes the isomerization between 2-isopropylmalate and 3-isopropylmalate, via the formation of 2-isopropylmaleate. The protein is 3-isopropylmalate dehydratase large subunit of Thioalkalivibrio sulfidiphilus (strain HL-EbGR7).